The chain runs to 405 residues: Scarecrow-like protein 23 (405 aa).

The disordered stretch occupies residues 1–20 (MTTKRIDRDLPSSDDPSSAK). The region spanning 31–400 (ENDGAAAIKL…LSLLTASAWK (370 aa)) is the GRAS domain. A leucine repeat I (LRI) region spans residues 38–102 (IKLLSLLLQC…ISSYLSGACS (65 aa)). Positions 45–49 (LQCAE) match the LxCxE motif motif. Residues 121-186 (LQTYNSVSPL…RKLRSIRITG (66 aa)) are VHIID. The VHIID signature appears at 152-156 (VHIID). The tract at residues 196–228 (STGRRLADFASSLNLPFEFHPIEGIIGNLIDPS) is leucine repeat II (LRII). The segment at 238–327 (VVVHWMQHRL…QIVLGTEIRN (90 aa)) is PFYRE. Positions 330-400 (AHGGGRRKRM…LSLLTASAWK (71 aa)) are SAW.

Belongs to the GRAS family. As to quaternary structure, interacts with SHR. Expressed in seedlings, cotyledons, shoot apex, leaves and flowers.

It localises to the nucleus. Probable transcription factor involved in plant development. The protein is Scarecrow-like protein 23 (SCL23) of Arabidopsis thaliana (Mouse-ear cress).